A 206-amino-acid chain; its full sequence is MPTVGVFNKEGNKVADMELNENVFAAEINEYALHQVVVALLANKRQGTQSTKTRSEVRGGGIKPWRQKGTGRARQGSIRSPQWIKGGIVFAPKPRDYRVSVPKSMRKVAMKSALTSKVQDNQMIVLDSLNFEAPKTKSMIEMLKALEANKALIITAESNEVVYKSARNIQGISVIPANNINVYDLLKYEKLIITKDAVSKIEEVYA.

Residues 47-77 (GTQSTKTRSEVRGGGIKPWRQKGTGRARQGS) form a disordered region.

It belongs to the universal ribosomal protein uL4 family. As to quaternary structure, part of the 50S ribosomal subunit.

Its function is as follows. One of the primary rRNA binding proteins, this protein initially binds near the 5'-end of the 23S rRNA. It is important during the early stages of 50S assembly. It makes multiple contacts with different domains of the 23S rRNA in the assembled 50S subunit and ribosome. Forms part of the polypeptide exit tunnel. The protein is Large ribosomal subunit protein uL4 of Clostridium beijerinckii (strain ATCC 51743 / NCIMB 8052) (Clostridium acetobutylicum).